The sequence spans 208 residues: FMN-dependent NADH:quinone oxidoreductase (208 aa).

FMN-binding positions include 17 to 19 (SNS), 99 to 102 (MWNL), and 143 to 146 (SRGG).

This sequence belongs to the azoreductase type 1 family. In terms of assembly, homodimer. FMN serves as cofactor.

The enzyme catalyses 2 a quinone + NADH + H(+) = 2 a 1,4-benzosemiquinone + NAD(+). The catalysed reaction is N,N-dimethyl-1,4-phenylenediamine + anthranilate + 2 NAD(+) = 2-(4-dimethylaminophenyl)diazenylbenzoate + 2 NADH + 2 H(+). Functionally, quinone reductase that provides resistance to thiol-specific stress caused by electrophilic quinones. Its function is as follows. Also exhibits azoreductase activity. Catalyzes the reductive cleavage of the azo bond in aromatic azo compounds to the corresponding amines. The sequence is that of FMN-dependent NADH:quinone oxidoreductase from Staphylococcus aureus (strain bovine RF122 / ET3-1).